The sequence spans 626 residues: Probable potassium transport system protein Kup (626 aa).

12 helical membrane passes run 11–31 (FLTLSAGALGVVYGDIGTSPL), 55–75 (LSLIFWALFIIVAVKYVVFVM), 103–123 (AWIISLGLFGTALFYGDGMIT), 140–160 (AALSHYVVPASILILLALFLI), 171–191 (LFGPIMLLWFLSIGTLGFVSL), 216–236 (LGFAALGAVVLAVTGAEALYA), 250–270 (WFAVVFPSLILNYLGQGALLI), 282–302 (LLVPEWALYPMIGLATAATVI), 340–360 (IYAPAVNRLLLISVLALVLAF), 369–389 (AYGLAVVGTMVVTTLLALVVA), 395–415 (WPGLALLVTGAVLLSVDLSFL), and 422–442 (LGDGGWIPLSLGLILATVMST).

The protein belongs to the HAK/KUP transporter (TC 2.A.72) family.

Its subcellular location is the cell inner membrane. It carries out the reaction K(+)(in) + H(+)(in) = K(+)(out) + H(+)(out). In terms of biological role, transport of potassium into the cell. Likely operates as a K(+):H(+) symporter. The chain is Probable potassium transport system protein Kup from Methylococcus capsulatus (strain ATCC 33009 / NCIMB 11132 / Bath).